A 182-amino-acid polypeptide reads, in one-letter code: MSRIGKRPITVPAKVQVTIDGTKVVVKGPKGELSRELPANVSVSQEGETLQVTRRDETRTSRQLHGLSRTLVANMVEGVSQGFQRRLEIQGVGYRAQVQGRNLVLNMGYSHQVQIEPPDGIQFVVENNTNVIVSGYDKEIVGNTAAKVRAVRPPEPYKGKGIRYAGEVVRRKAGKTGKGGKK.

Belongs to the universal ribosomal protein uL6 family. Part of the 50S ribosomal subunit.

In terms of biological role, this protein binds to the 23S rRNA, and is important in its secondary structure. It is located near the subunit interface in the base of the L7/L12 stalk, and near the tRNA binding site of the peptidyltransferase center. This is Large ribosomal subunit protein uL6 from Nostoc sp. (strain PCC 7120 / SAG 25.82 / UTEX 2576).